The following is a 212-amino-acid chain: Thymidylate kinase (212 aa).

Ala-2 bears the N-acetylalanine mark. ATP is bound by residues 16 to 21 (RAGKST) and Arg-97. The LID stretch occupies residues 133 to 157 (LQLQLADAAKRGAFGHERYENGAFQ). Residue Lys-169 is modified to N6-acetyllysine. 2 residues coordinate ATP: Lys-182 and Arg-192.

Belongs to the thymidylate kinase family. As to quaternary structure, homodimer. It depends on Mg(2+) as a cofactor.

The enzyme catalyses dTMP + ATP = dTDP + ADP. The protein operates within pyrimidine metabolism; dTTP biosynthesis. Its function is as follows. Catalyzes the phosphorylation of thymidine monophosphate (dTMP) to thymidine diphosphate (dTDP), the immediate precursor for the DNA building block dTTP, with ATP as the preferred phosphoryl donor in the presence of Mg(2+). The chain is Thymidylate kinase (DTYMK) from Homo sapiens (Human).